The chain runs to 609 residues: Pentatricopeptide repeat-containing protein At1g03540 (609 aa).

PPR repeat units lie at residues serine 25–alanine 59, threonine 60–threonine 94, aspartate 95–lysine 126, aspartate 127–alanine 161, asparagine 162–tryptophan 196, asparagine 197–proline 227, aspartate 228–proline 263, aspartate 264–serine 298, asparagine 299–lysine 329, asparagine 330–cysteine 364, asparagine 396–arginine 426, asparagine 427–proline 461, aspartate 462–proline 497, and glycine 498–serine 532. The type E motif stretch occupies residues leucine 533–histidine 609.

It belongs to the PPR family. PCMP-E subfamily.

This is Pentatricopeptide repeat-containing protein At1g03540 (PCMP-E4) from Arabidopsis thaliana (Mouse-ear cress).